The primary structure comprises 289 residues: NAD(P)H-hydrate epimerase (289 aa).

The YjeF N-terminal domain occupies 71-277 (AQTIDNELMS…SIVEKYNLKI (207 aa)). 122 to 126 (NNGGD) serves as a coordination point for (6S)-NADPHX. K(+)-binding residues include N123 and D185. Residues 189–195 (GFSFRGE) and D218 each bind (6S)-NADPHX. S221 contacts K(+).

The protein belongs to the NnrE/AIBP family. The cofactor is K(+).

It carries out the reaction (6R)-NADHX = (6S)-NADHX. The catalysed reaction is (6R)-NADPHX = (6S)-NADPHX. Functionally, catalyzes the epimerization of the S- and R-forms of NAD(P)HX, a damaged form of NAD(P)H that is a result of enzymatic or heat-dependent hydration. This is a prerequisite for the S-specific NAD(P)H-hydrate dehydratase to allow the repair of both epimers of NAD(P)HX. The polypeptide is NAD(P)H-hydrate epimerase (Plasmodium knowlesi (strain H)).